Here is a 378-residue protein sequence, read N- to C-terminus: Erythronate-4-phosphate dehydrogenase (378 aa).

Substrate is bound by residues S45 and T66. D146 and T175 together coordinate NAD(+). Residue R208 is part of the active site. Residue D232 coordinates NAD(+). E237 is an active-site residue. The Proton donor role is filled by H254. G257 is a binding site for NAD(+). Y258 provides a ligand contact to substrate.

The protein belongs to the D-isomer specific 2-hydroxyacid dehydrogenase family. PdxB subfamily. In terms of assembly, homodimer.

Its subcellular location is the cytoplasm. The enzyme catalyses 4-phospho-D-erythronate + NAD(+) = (R)-3-hydroxy-2-oxo-4-phosphooxybutanoate + NADH + H(+). It functions in the pathway cofactor biosynthesis; pyridoxine 5'-phosphate biosynthesis; pyridoxine 5'-phosphate from D-erythrose 4-phosphate: step 2/5. Catalyzes the oxidation of erythronate-4-phosphate to 3-hydroxy-2-oxo-4-phosphonooxybutanoate. The protein is Erythronate-4-phosphate dehydrogenase of Escherichia coli O81 (strain ED1a).